Reading from the N-terminus, the 253-residue chain is Sugar fermentation stimulation protein homolog (253 aa).

The protein belongs to the SfsA family.

In Chromohalobacter salexigens (strain ATCC BAA-138 / DSM 3043 / CIP 106854 / NCIMB 13768 / 1H11), this protein is Sugar fermentation stimulation protein homolog.